A 408-amino-acid chain; its full sequence is Imidazolonepropionase (408 aa).

Positions 66 and 68 each coordinate Fe(3+). Positions 66 and 68 each coordinate Zn(2+). 4-imidazolone-5-propanoate contacts are provided by R75, Y138, and H171. Y138 is a binding site for N-formimidoyl-L-glutamate. H236 serves as a coordination point for Fe(3+). H236 provides a ligand contact to Zn(2+). Q239 contributes to the 4-imidazolone-5-propanoate binding site. D311 is a Fe(3+) binding site. D311 is a Zn(2+) binding site. N-formimidoyl-L-glutamate-binding residues include N313 and G315. S316 contributes to the 4-imidazolone-5-propanoate binding site.

The protein belongs to the metallo-dependent hydrolases superfamily. HutI family. The cofactor is Zn(2+). It depends on Fe(3+) as a cofactor.

Its subcellular location is the cytoplasm. The catalysed reaction is 4-imidazolone-5-propanoate + H2O = N-formimidoyl-L-glutamate. Its pathway is amino-acid degradation; L-histidine degradation into L-glutamate; N-formimidoyl-L-glutamate from L-histidine: step 3/3. Functionally, catalyzes the hydrolytic cleavage of the carbon-nitrogen bond in imidazolone-5-propanoate to yield N-formimidoyl-L-glutamate. It is the third step in the universal histidine degradation pathway. The protein is Imidazolonepropionase of Idiomarina loihiensis (strain ATCC BAA-735 / DSM 15497 / L2-TR).